The following is a 116-amino-acid chain: Large ribosomal subunit protein bL19 (116 aa).

This sequence belongs to the bacterial ribosomal protein bL19 family.

Its function is as follows. This protein is located at the 30S-50S ribosomal subunit interface and may play a role in the structure and function of the aminoacyl-tRNA binding site. This Haemophilus ducreyi (strain 35000HP / ATCC 700724) protein is Large ribosomal subunit protein bL19.